Reading from the N-terminus, the 270-residue chain is Formamidopyrimidine-DNA glycosylase (270 aa).

Proline 2 acts as the Schiff-base intermediate with DNA in catalysis. Residue glutamate 3 is the Proton donor of the active site. Lysine 58 acts as the Proton donor; for beta-elimination activity in catalysis. DNA-binding residues include histidine 91, arginine 109, and arginine 151. An FPG-type zinc finger spans residues 236 to 270 (QVYGKTGQQCPSCETPLKAVKLAARASVYCPECQS). Arginine 260 (proton donor; for delta-elimination activity) is an active-site residue.

This sequence belongs to the FPG family. In terms of assembly, monomer. The cofactor is Zn(2+).

The enzyme catalyses Hydrolysis of DNA containing ring-opened 7-methylguanine residues, releasing 2,6-diamino-4-hydroxy-5-(N-methyl)formamidopyrimidine.. It carries out the reaction 2'-deoxyribonucleotide-(2'-deoxyribose 5'-phosphate)-2'-deoxyribonucleotide-DNA = a 3'-end 2'-deoxyribonucleotide-(2,3-dehydro-2,3-deoxyribose 5'-phosphate)-DNA + a 5'-end 5'-phospho-2'-deoxyribonucleoside-DNA + H(+). Its function is as follows. Involved in base excision repair of DNA damaged by oxidation or by mutagenic agents. Acts as a DNA glycosylase that recognizes and removes damaged bases. Has a preference for oxidized purines, such as 7,8-dihydro-8-oxoguanine (8-oxoG). Has AP (apurinic/apyrimidinic) lyase activity and introduces nicks in the DNA strand. Cleaves the DNA backbone by beta-delta elimination to generate a single-strand break at the site of the removed base with both 3'- and 5'-phosphates. This Psychromonas ingrahamii (strain DSM 17664 / CCUG 51855 / 37) protein is Formamidopyrimidine-DNA glycosylase.